A 252-amino-acid chain; its full sequence is MNILLSNDDGIMSPGIITLKTYLQQKHDVYVVAPDIERSATGHGITVRNPLWAKKVKFGDTFFGHAVNGTPADCVKIGLDAIYKDIHFDVVISGINRGANLGTDVLYSGTVSAALEGAVGGYPSIAVSCVDFSNPNFEDGAKVVLNILEKLDLNNWPEFTTLNVNIPKIPYDEMKGIKITKQSRRRYQDYFEERKDPFGNSYYWMLGNIIEDDNDDNSDYNVINQGYVAVTPLSVFMTKYDFIDELKSWLEV.

A divalent metal cation is bound by residues D8, D9, S39, and N96.

It belongs to the SurE nucleotidase family. Requires a divalent metal cation as cofactor.

The protein localises to the cytoplasm. The catalysed reaction is a ribonucleoside 5'-phosphate + H2O = a ribonucleoside + phosphate. Its function is as follows. Nucleotidase that shows phosphatase activity on nucleoside 5'-monophosphates. This is 5'-nucleotidase SurE from Petrotoga mobilis (strain DSM 10674 / SJ95).